The chain runs to 161 residues: Nucleotide-binding protein PFL_4775 (161 aa).

This sequence belongs to the YajQ family.

Its function is as follows. Nucleotide-binding protein. In Pseudomonas fluorescens (strain ATCC BAA-477 / NRRL B-23932 / Pf-5), this protein is Nucleotide-binding protein PFL_4775.